The following is a 118-amino-acid chain: Ribosome-binding factor A (118 aa).

It belongs to the RbfA family. In terms of assembly, monomer. Binds 30S ribosomal subunits, but not 50S ribosomal subunits or 70S ribosomes.

It is found in the cytoplasm. Functionally, one of several proteins that assist in the late maturation steps of the functional core of the 30S ribosomal subunit. Associates with free 30S ribosomal subunits (but not with 30S subunits that are part of 70S ribosomes or polysomes). Required for efficient processing of 16S rRNA. May interact with the 5'-terminal helix region of 16S rRNA. The polypeptide is Ribosome-binding factor A (Streptococcus pyogenes serotype M1).